We begin with the raw amino-acid sequence, 118 residues long: Putative pterin-4-alpha-carbinolamine dehydratase (118 aa).

The protein belongs to the pterin-4-alpha-carbinolamine dehydratase family.

The enzyme catalyses (4aS,6R)-4a-hydroxy-L-erythro-5,6,7,8-tetrahydrobiopterin = (6R)-L-erythro-6,7-dihydrobiopterin + H2O. This chain is Putative pterin-4-alpha-carbinolamine dehydratase, found in Stutzerimonas stutzeri (strain A1501) (Pseudomonas stutzeri).